Consider the following 540-residue polypeptide: MPTINLNKWILQDMTGLNEQELVDYLFKLKSEVSPVSQDEYSIEVNADRLDMLSLGGIVRALKGITGKELGEPSYPVKDTDYVLEVEKVASRPYALACVIYNVKLSPDFYLKELIQFQEKLHDTIGRRRKKVAIGIHDLEKVEGKIIRYAPVSLSTTFIPLNQEREMSVRDVLQETPQGKQYGNISVWDSNSPAIMDERGILSVPPVINSDRTKITGNTKSLLIDVTGTNFESVMETMDLLATALAELGGIIGRVKVRGMSVDRSPVLRHTSVPFSLDDVNKRLGIHVSRDEAINLIRMMRMEVETNKDLAVIVPPYRVDIMNYTDVAEDIAMAYGYDRFTLESGRTASRGSLSEKSEIYRKLRTLLVGAGFQEVYTLVLTKSSYQRGEAVNIANPISVEYDSVRNSLLWNSLVFLSNNQHSRFPVRIFEIGDVVNRDDSKDTKYSNSTRLSMAIMDSRVSYEMLQAPLHEVLLNLLGVAPSYRRFESDIFMKGRSAEVVVKGETIGRLGEANPELLRSFGLLYPVLLAELDLDALRRVM.

Residues 268-342 (LRHTSVPFSL…MAYGYDRFTL (75 aa)) form the B5 domain. Positions 320, 326, 329, and 330 each coordinate Mg(2+).

It belongs to the phenylalanyl-tRNA synthetase beta subunit family. Type 2 subfamily. As to quaternary structure, tetramer of two alpha and two beta subunits. The cofactor is Mg(2+).

Its subcellular location is the cytoplasm. The catalysed reaction is tRNA(Phe) + L-phenylalanine + ATP = L-phenylalanyl-tRNA(Phe) + AMP + diphosphate + H(+). The protein is Phenylalanine--tRNA ligase beta subunit of Metallosphaera sedula (strain ATCC 51363 / DSM 5348 / JCM 9185 / NBRC 15509 / TH2).